A 305-amino-acid polypeptide reads, in one-letter code: MKKIKCALIGPGNIGTDLLAKLQRSAVLEPVWMVGIDPESDGLKRAREMGIKTTSDGVDGLIPHMKADGVQIVFDATSAYVHAENSRKVNEQGALMIDLTPAAIGPFCVPPVNLKAHVGSGEMNVNMVTCGGQATIPMVAAVSRVQPVAYGEIVATVSSRSVGPGTRKNIDEFTRTTAGAVEKVGGARKGKAIIVINPAEPPLMMRDTVHCLTETEPDQAAITASVHAMLAEVQKYVPGYRLVNGPVFDGNRVSVFLEVEGLGDYLPKYAGNLDIMTAAAARTAEMFAEEILKGELVLQPTAVAA.

Cys-130 (acyl-thioester intermediate) is an active-site residue. Residues Ser-161–Asn-169 and Asn-272 each bind NAD(+).

The protein belongs to the acetaldehyde dehydrogenase family.

The catalysed reaction is acetaldehyde + NAD(+) + CoA = acetyl-CoA + NADH + H(+). The protein is Acetaldehyde dehydrogenase of Leptothrix cholodnii (strain ATCC 51168 / LMG 8142 / SP-6) (Leptothrix discophora (strain SP-6)).